Consider the following 330-residue polypeptide: Putative quinone oxidoreductase YhfP (330 aa).

Residues tyrosine 45, 160–163, 182–184, arginine 202, leucine 248, isoleucine 262, serine 273, and asparagine 320 contribute to the NADP(+) site; these read TGGV and TGN.

It belongs to the zinc-containing alcohol dehydrogenase family. Quinone oxidoreductase subfamily. In terms of assembly, homodimer, or homotetramer.

The protein resides in the cytoplasm. This Bacillus subtilis (strain 168) protein is Putative quinone oxidoreductase YhfP (yhfP).